A 1001-amino-acid chain; its full sequence is Chloride channel protein clh-3 (1001 aa).

The Cytoplasmic segment spans residues 1–48 (MGIGTKILSKIEKNKTSDGLTIPLTPTTQKQSSSWCSFESIKTFFRTV). The next 2 helical transmembrane spans lie at 49–85 (IRDW…RLFD) and 91–117 (HFTL…AHYI). The short motif at 123-127 (GSGIP) is the Selectivity filter part_1 element. Position 124 (serine 124) interacts with chloride. Residues 126–133 (IPEMKTIL) constitute an intramembrane region (helical). The next 2 helical transmembrane spans lie at 142-160 (LSVR…SLGS) and 167-185 (EGPF…TRLV). The short motif at 165 to 169 (GKEGP) is the Selectivity filter part_2 element. Intramembrane regions (helical) lie at residues 202–214 (MLAA…VACT) and 218–226 (PIGGVLFSI). The next 5 membrane-spanning stretches (helical) occupy residues 238–258 (YWRG…LRMF), 285–313 (LPIF…VLFL), 322–341 (IFQK…ISSL), 405–425 (YSPF…AILA), and 433–456 (GIFM…VFSL). The short motif at 433-437 (GIFMP) is the Selectivity filter part_3 element. Chloride is bound by residues isoleucine 434 and phenylalanine 435. Positions 473 to 487 (GVYAVVGAAAFCGAV) form an intramembrane region, helical. Residues 488–489 (TH) constitute an intramembrane region (note=Loop between two helices). The segment at residues 490 to 501 (TVSVAVIVFELT) is an intramembrane region (helical). Positions 502–506 (GQLCH) form an intramembrane region, note=Loop between two helices. A helical membrane pass occupies residues 507 to 524 (LLPVMIAVLIANAVASYL). The Cytoplasmic segment spans residues 525-1001 (QPSIYDSIIR…LPDDVHDEKF (477 aa)). Tyrosine 529 is a binding site for chloride. The CBS 1 domain occupies 560-619 (MISPLVYIAKDSTVGDIKRALETKTRIRAFPLVENMESLALVGSVSRSQLQRYVDSQIGT). Residues 625 to 657 (EATRRIKQRLEDEESERKRREESKSDDTEDSLE) adopt a coiled-coil conformation. Residues 634–650 (LEDEESERKRREESKSD) show a composition bias toward basic and acidic residues. Residues 634-662 (LEDEESERKRREESKSDDTEDSLETTGAG) form a disordered region. Serine 742 and serine 747 each carry phosphoserine; by gck-3. One can recognise a CBS 2 domain in the interval 788–845 (IDSTPFQLSEYTSLFKAHSLFSLLGLNRAYVTKKGQLIGVVALKELRLAIEYLQSGKV).

The protein belongs to the chloride channel (TC 2.A.49) family. In terms of assembly, isoform a interacts (via RFLI motif) with gck-3 (via C-terminus). Phosphorylated by gck-3; phosphorylation at both Ser-742 and Ser-747 is required to inhibit channel activity. Dephosphorylated by gsp-1/2 during cell swelling and oocyte meiotic maturation, which results in channel activation. In terms of tissue distribution, expressed in excretory cell, 4 anterior epithelial cells of the intestine, hermaphrodite-specific neurons and enteric muscles. Expressed also in vulva and uterus. Isoform a is expressed in oocytes (at protein level).

It is found in the cell membrane. Functionally, voltage-gated chloride channel. Insensitive to depolarizing conditioning voltages, requires low voltages for activation, insensitive to chloride levels and has a mild sensitivity to low pH. Channel gating properties are conferred by the cytoplasmic C-terminus. Plays a role in egg laying by modulating hermaphrodite-specific neurons (HSN) excitability and the ovulatory contractions of gap-junction-coupled gonadal sheath cells. When active, may prevent tubular formation of the excretory canals. Activated during oocyte meiotic maturation and by membrane hyperpolarization and cell swelling. Inhibited by Zn(2+) and to a lesser extent by Cd(2+). In terms of biological role, voltage-gated chloride channel. Sensitive to depolarizing conditioning voltages, requires stronger voltages for activation and activation is slower, is inhibited by low concentrations of chloride and is activated by low pH. Channel gating properties are conferred by the cytoplasmic C-terminus. This Caenorhabditis elegans protein is Chloride channel protein clh-3.